Here is a 272-residue protein sequence, read N- to C-terminus: 2-dehydro-3-deoxyphosphooctonate aldolase (272 aa).

The protein belongs to the KdsA family.

The protein localises to the cytoplasm. The enzyme catalyses D-arabinose 5-phosphate + phosphoenolpyruvate + H2O = 3-deoxy-alpha-D-manno-2-octulosonate-8-phosphate + phosphate. The protein operates within carbohydrate biosynthesis; 3-deoxy-D-manno-octulosonate biosynthesis; 3-deoxy-D-manno-octulosonate from D-ribulose 5-phosphate: step 2/3. It functions in the pathway bacterial outer membrane biogenesis; lipopolysaccharide biosynthesis. This Geobacter sulfurreducens (strain ATCC 51573 / DSM 12127 / PCA) protein is 2-dehydro-3-deoxyphosphooctonate aldolase.